Reading from the N-terminus, the 317-residue chain is Malate dehydrogenase (317 aa).

NAD(+) is bound by residues 10–15 and Asp34; that span reads GGGQIG. Substrate-binding residues include Arg83 and Arg89. NAD(+) is bound by residues Asn96 and 119–121; that span reads ISN. 2 residues coordinate substrate: Asn121 and Arg152. His176 acts as the Proton acceptor in catalysis.

Belongs to the LDH/MDH superfamily. MDH type 3 family.

It catalyses the reaction (S)-malate + NAD(+) = oxaloacetate + NADH + H(+). Its function is as follows. Catalyzes the reversible oxidation of malate to oxaloacetate. This is Malate dehydrogenase from Geobacter metallireducens (strain ATCC 53774 / DSM 7210 / GS-15).